We begin with the raw amino-acid sequence, 505 residues long: Deoxyguanosinetriphosphate triphosphohydrolase (505 aa).

One can recognise an HD domain in the interval 66 to 273; sequence RLTHSMEVQQ…MEAADDISYC (208 aa).

Belongs to the dGTPase family. Type 1 subfamily. As to quaternary structure, homotetramer. Mg(2+) serves as cofactor.

The catalysed reaction is dGTP + H2O = 2'-deoxyguanosine + triphosphate + H(+). In terms of biological role, dGTPase preferentially hydrolyzes dGTP over the other canonical NTPs. The polypeptide is Deoxyguanosinetriphosphate triphosphohydrolase (Escherichia coli O7:K1 (strain IAI39 / ExPEC)).